The sequence spans 275 residues: tRNA uridine(34) hydroxylase (275 aa).

Residues 122 to 218 (SRSDVYTIDT…YFKSTQNKNS (97 aa)) enclose the Rhodanese domain. The Cysteine persulfide intermediate role is filled by C178.

It belongs to the TrhO family.

It catalyses the reaction uridine(34) in tRNA + AH2 + O2 = 5-hydroxyuridine(34) in tRNA + A + H2O. Functionally, catalyzes oxygen-dependent 5-hydroxyuridine (ho5U) modification at position 34 in tRNAs. The sequence is that of tRNA uridine(34) hydroxylase from Ehrlichia chaffeensis (strain ATCC CRL-10679 / Arkansas).